Consider the following 313-residue polypeptide: Ribosomal RNA small subunit methyltransferase H (313 aa).

Residues 35–37, aspartate 55, phenylalanine 80, aspartate 102, and glutamine 109 each bind S-adenosyl-L-methionine; that span reads GGH.

It belongs to the methyltransferase superfamily. RsmH family.

The protein localises to the cytoplasm. The catalysed reaction is cytidine(1402) in 16S rRNA + S-adenosyl-L-methionine = N(4)-methylcytidine(1402) in 16S rRNA + S-adenosyl-L-homocysteine + H(+). Specifically methylates the N4 position of cytidine in position 1402 (C1402) of 16S rRNA. This Shewanella woodyi (strain ATCC 51908 / MS32) protein is Ribosomal RNA small subunit methyltransferase H.